The chain runs to 113 residues: UPF0482 protein YnfB (113 aa).

Positions 1–28 are cleaved as a signal peptide; it reads MNNTLSKRLCLTAMLTLAAVVYTTSAFA.

The protein belongs to the UPF0482 family.

The chain is UPF0482 protein YnfB from Salmonella agona (strain SL483).